The chain runs to 301 residues: MECAVDAQSLISISLRKIHNSRTQRGGIKLHKNLLVSYVLRNARQVYMNEKYAEIYRMQQYEEVMTVCNEIQELNPLDLAEDCEDQTADCCGSASESASLCGALLPAVGHQTSPAAQHIQPASACSVPLALQSEEVCKAAPEPSFYRSCCAEAYPVSNCDFSPVNNMHCNKTTVLDLDTHVVTTVENGYLHQDCCASLQQCCQGAQSPAKKRKLDFGYYVSEIEEAPDFTPCKRAKFEDSSYAITEPLDTSNISNLISIFGSGFSGLVSRQADLEQALNGQFCSKQALASLGAWTRAIVAF.

The protein belongs to the IER family.

This chain is Immediate early response gene 5-like protein (ier5l), found in Danio rerio (Zebrafish).